The primary structure comprises 159 residues: MRIGHGFDVHAFGGEGPIIIGGVRIPYEKGLLAHSDGDVALHALTDALLGAAALGDIGKLFPDTDPAFKGADSRELLREAWRRIQAKGYTLGNVDVTIIAQAPKMLPHIPRMRVFIAEDLGCHMDDVNVKATTTEKLGFTGRGEGIACEAVALLMKAAK.

Asp-8 and His-10 together coordinate a divalent metal cation. Residues 8 to 10 (DVH) and 34 to 35 (HS) each bind 4-CDP-2-C-methyl-D-erythritol 2-phosphate. His-42 contributes to the a divalent metal cation binding site. Residues 56–58 (DIG), 61–65 (FPDTD), 100–106 (AQAPKML), 132–135 (TTTE), Phe-139, and Arg-142 contribute to the 4-CDP-2-C-methyl-D-erythritol 2-phosphate site.

It belongs to the IspF family. Homotrimer. It depends on a divalent metal cation as a cofactor.

The enzyme catalyses 4-CDP-2-C-methyl-D-erythritol 2-phosphate = 2-C-methyl-D-erythritol 2,4-cyclic diphosphate + CMP. It participates in isoprenoid biosynthesis; isopentenyl diphosphate biosynthesis via DXP pathway; isopentenyl diphosphate from 1-deoxy-D-xylulose 5-phosphate: step 4/6. In terms of biological role, involved in the biosynthesis of isopentenyl diphosphate (IPP) and dimethylallyl diphosphate (DMAPP), two major building blocks of isoprenoid compounds. Catalyzes the conversion of 4-diphosphocytidyl-2-C-methyl-D-erythritol 2-phosphate (CDP-ME2P) to 2-C-methyl-D-erythritol 2,4-cyclodiphosphate (ME-CPP) with a corresponding release of cytidine 5-monophosphate (CMP). This is 2-C-methyl-D-erythritol 2,4-cyclodiphosphate synthase from Salmonella choleraesuis (strain SC-B67).